The primary structure comprises 332 residues: MMKKPVVIGLAVVVLAAVVAGGYWWYQSRQDNGLTLYGNVDIRTVNLSFRVGGRVESLAVDEGDAIKAGQVLGELDHKPYEIALMQAKAGVSVAQAQYDLMLAGYRDEEIAQAAAAVKQAQAAYDYAQNFYNRQQGLWKSRTISANDLENARSSRDQAQATLKSAQDKLRQYRSGNREQDIAQAKASLEQAQAQLAQAELNLQDSTLIAPSDGTLLTRAVEPGTVLNEGGTVFTVSLTRPVWVRAYVDERNLDQAQPGRKVLLYTDGRPDKPYHGQIGFVSPTAEFTPKTVETPDLRTDLVYRLRIVVTDADDALRQGMPVTVQFGNEAGHE.

The N-terminal stretch at 1–16 (MMKKPVVIGLAVVVLA) is a signal peptide. Residues 108–209 (EEIAQAAAAV…LNLQDSTLIA (102 aa)) are a coiled coil.

Belongs to the UPF0194 family.

It is found in the periplasm. The polypeptide is UPF0194 membrane protein YbhG (Escherichia coli (strain 55989 / EAEC)).